The sequence spans 293 residues: Acetylglutamate kinase (293 aa).

Residues 71–72 (GG), Arg93, and Asn186 each bind substrate.

This sequence belongs to the acetylglutamate kinase family. ArgB subfamily.

The protein localises to the cytoplasm. The catalysed reaction is N-acetyl-L-glutamate + ATP = N-acetyl-L-glutamyl 5-phosphate + ADP. It participates in amino-acid biosynthesis; L-arginine biosynthesis; N(2)-acetyl-L-ornithine from L-glutamate: step 2/4. In terms of biological role, catalyzes the ATP-dependent phosphorylation of N-acetyl-L-glutamate. The chain is Acetylglutamate kinase from Synechococcus sp. (strain WH7803).